The following is a 123-amino-acid chain: Alpha-ketoglutarate dehydrogenase subunit 4, mitochondrial (123 aa).

The N-terminal 8 residues, 1–8 (MIATPIRL), are a transit peptide targeting the mitochondrion.

Belongs to the alpha-ketoglutarate dehydrogenase component 4 family. Component of the 2-oxoglutarate dehydrogenase complex (OGDC), also called alpha-ketoglutarate dehydrogenase (KGDH) complex. The copmplex is composed of the catalytic subunits OGDH (2-oxoglutarate dehydrogenase KGD1; also called E1 subunit), DLST (dihydrolipoamide succinyltransferase KGD2; also called E2 subunit) and DLD (dihydrolipoamide dehydrogenase LPD1; also called E3 subunit), and the assembly factor KGD4. Within OGDC, interacts (via N-terminus) with E3 subunit and (via C-terminus) with the complex core formed by E1 and E2 subunits.

Its subcellular location is the mitochondrion. Functionally, molecular adapter that is necessary to a form a stable 2-oxoglutarate dehydrogenase enzyme complex (OGDC). Required for incorporation of the E3 subunit (LPD1) into the E1-E2 core (KGD1-KGD2) of mitochondrial OGDC, and acting as a stability factor for the fully assembled complex. The polypeptide is Alpha-ketoglutarate dehydrogenase subunit 4, mitochondrial (Saccharomyces cerevisiae (strain ATCC 204508 / S288c) (Baker's yeast)).